Reading from the N-terminus, the 460-residue chain is Probable Xaa-Pro aminopeptidase PEPP (460 aa).

Mn(2+) contacts are provided by aspartate 256, aspartate 267, glutamate 390, and glutamate 430.

Belongs to the peptidase M24B family. The cofactor is Mn(2+).

The catalysed reaction is Release of any N-terminal amino acid, including proline, that is linked to proline, even from a dipeptide or tripeptide.. Catalyzes the removal of a penultimate prolyl residue from the N-termini of peptides. This is Probable Xaa-Pro aminopeptidase PEPP (PEPP) from Podospora anserina (strain S / ATCC MYA-4624 / DSM 980 / FGSC 10383) (Pleurage anserina).